Reading from the N-terminus, the 203-residue chain is ATP-dependent Clp protease proteolytic subunit (203 aa).

Serine 100 functions as the Nucleophile in the catalytic mechanism. Residue histidine 125 is part of the active site.

This sequence belongs to the peptidase S14 family. As to quaternary structure, fourteen ClpP subunits assemble into 2 heptameric rings which stack back to back to give a disk-like structure with a central cavity, resembling the structure of eukaryotic proteasomes.

The protein localises to the cytoplasm. The enzyme catalyses Hydrolysis of proteins to small peptides in the presence of ATP and magnesium. alpha-casein is the usual test substrate. In the absence of ATP, only oligopeptides shorter than five residues are hydrolyzed (such as succinyl-Leu-Tyr-|-NHMec, and Leu-Tyr-Leu-|-Tyr-Trp, in which cleavage of the -Tyr-|-Leu- and -Tyr-|-Trp bonds also occurs).. Cleaves peptides in various proteins in a process that requires ATP hydrolysis. Has a chymotrypsin-like activity. Plays a major role in the degradation of misfolded proteins. This Anaeromyxobacter dehalogenans (strain 2CP-1 / ATCC BAA-258) protein is ATP-dependent Clp protease proteolytic subunit.